The sequence spans 703 residues: Polyribonucleotide nucleotidyltransferase (703 aa).

Mg(2+) is bound by residues D489 and D495. Residues P556–V615 form the KH domain. The region spanning G625–K693 is the S1 motif domain.

It belongs to the polyribonucleotide nucleotidyltransferase family. As to quaternary structure, component of the RNA degradosome, which is a multiprotein complex involved in RNA processing and mRNA degradation. Mg(2+) is required as a cofactor.

The protein resides in the cytoplasm. It catalyses the reaction RNA(n+1) + phosphate = RNA(n) + a ribonucleoside 5'-diphosphate. In terms of biological role, involved in mRNA degradation. Catalyzes the phosphorolysis of single-stranded polyribonucleotides processively in the 3'- to 5'-direction. This chain is Polyribonucleotide nucleotidyltransferase, found in Pseudomonas fluorescens (strain ATCC BAA-477 / NRRL B-23932 / Pf-5).